A 202-amino-acid polypeptide reads, in one-letter code: ATP-dependent Clp protease proteolytic subunit (202 aa).

Ser-98 serves as the catalytic Nucleophile. His-123 is an active-site residue.

The protein belongs to the peptidase S14 family. In terms of assembly, fourteen ClpP subunits assemble into 2 heptameric rings which stack back to back to give a disk-like structure with a central cavity, resembling the structure of eukaryotic proteasomes.

The protein resides in the cytoplasm. The enzyme catalyses Hydrolysis of proteins to small peptides in the presence of ATP and magnesium. alpha-casein is the usual test substrate. In the absence of ATP, only oligopeptides shorter than five residues are hydrolyzed (such as succinyl-Leu-Tyr-|-NHMec, and Leu-Tyr-Leu-|-Tyr-Trp, in which cleavage of the -Tyr-|-Leu- and -Tyr-|-Trp bonds also occurs).. Cleaves peptides in various proteins in a process that requires ATP hydrolysis. Has a chymotrypsin-like activity. Plays a major role in the degradation of misfolded proteins. This chain is ATP-dependent Clp protease proteolytic subunit, found in Magnetococcus marinus (strain ATCC BAA-1437 / JCM 17883 / MC-1).